Reading from the N-terminus, the 324-residue chain is Methionyl-tRNA formyltransferase (324 aa).

109 to 112 provides a ligand contact to (6S)-5,6,7,8-tetrahydrofolate; sequence SLLP. Positions 305–324 are disordered; it reads LHPGESFHKATQDNQGASET.

Belongs to the Fmt family.

The catalysed reaction is L-methionyl-tRNA(fMet) + (6R)-10-formyltetrahydrofolate = N-formyl-L-methionyl-tRNA(fMet) + (6S)-5,6,7,8-tetrahydrofolate + H(+). Its function is as follows. Attaches a formyl group to the free amino group of methionyl-tRNA(fMet). The formyl group appears to play a dual role in the initiator identity of N-formylmethionyl-tRNA by promoting its recognition by IF2 and preventing the misappropriation of this tRNA by the elongation apparatus. The chain is Methionyl-tRNA formyltransferase from Nitrosomonas europaea (strain ATCC 19718 / CIP 103999 / KCTC 2705 / NBRC 14298).